We begin with the raw amino-acid sequence, 95 residues long: Integration host factor subunit beta (95 aa).

This sequence belongs to the bacterial histone-like protein family. In terms of assembly, heterodimer of an alpha and a beta chain.

Functionally, this protein is one of the two subunits of integration host factor, a specific DNA-binding protein that functions in genetic recombination as well as in transcriptional and translational control. This chain is Integration host factor subunit beta, found in Paracoccus denitrificans (strain Pd 1222).